Reading from the N-terminus, the 165-residue chain is uncharacterized protein (165 aa).

5 helical membrane passes run 30–50, 65–85, 86–106, 108–128, and 131–151; these read GWEL…AAGG, GMVW…VSGL, SAFW…VWQG, FWLL…FASG, and WTVT…SEYG.

To E.coli YcdZ.

The protein localises to the cell membrane. This is an uncharacterized protein from Escherichia coli (strain K12).